Here is a 64-residue protein sequence, read N- to C-terminus: Lantipeptide Flvbeta.d (64 aa).

A propeptide spans 1-31 (MDNNTEKFNELAAIADESELNEMLDENITGA) (cleaved by FlvT). The lanthionine (Ser-Cys); by FlvM2 cross-link spans 33-37 (STIQC). A 2,3-didehydrobutyrine; by FlvM2 mark is found at threonine 34 and threonine 41. 3 consecutive cross-links (beta-methyllanthionine (Thr-Cys); by FlvM2) follow at residues 44-52 (TILSVVFDC), 55-58 (TSAC), and 59-62 (TPPC). The segment at residues 47 to 53 (SVVFDCC) is a cross-link (lanthionine (Ser-Cys); by FlvM2).

Post-translationally, contains LL-lanthionine, DL-lanthionine, and DL-beta-methyllanthionine, when coepressed in E.coli with the flavecin synthetase FlvM2.

It is found in the secreted. In terms of biological role, lanthionine-containing peptide that does probably not show antibacterial activity, since its analog [+2]Flvbeta.d does not show antibacterial activity against M.luteus. Also does not show antibiotic activity when tested with [Del2]Flvalpha.a, an analog of Flvalpha.a, which is encoded by the same operon than Flvbeta.d. The bactericidal activity of lantibiotics is based on depolarization of energized bacterial cytoplasmic membranes, initiated by the formation of aqueous transmembrane pores. This is Lantipeptide Flvbeta.d from Ruminococcus flavefaciens.